Reading from the N-terminus, the 235-residue chain is Interleukin-34 (235 aa).

An N-terminal signal peptide occupies residues 1–20 (MPWGLAWLYCLGILLDVALG). Asn-100 carries an N-linked (GlcNAc...) asparagine glycan.

It belongs to the IL-34 family. As to quaternary structure, homodimer. Interacts with CSF1R.

It is found in the secreted. Its function is as follows. Cytokine that promotes the proliferation, survival and differentiation of monocytes and macrophages. Promotes the release of pro-inflammatory chemokines, and thereby plays an important role in innate immunity and in inflammatory processes. Plays an important role in the regulation of osteoclast proliferation and differentiation, and in the regulation of bone resorption. Signaling via CSF1R and its downstream effectors stimulates phosphorylation of MAPK1/ERK2 AND MAPK3/ERK1. This chain is Interleukin-34 (Il34), found in Mus musculus (Mouse).